The sequence spans 214 residues: MKTINIVAGGPKNLIPDLTGYTDEHTLWIGVDKGTVTLLDAGIIPVEAFGDFDSITEQERRRIEKAAPALHVYQAEKDQTDLDLALDWALEKQPDIIQIFGITGGRADHFLGNIQLLYKGVKTNIKIRLIDKQNHIQMFPPGEYDIEKDENKRYISFIPFSEDIHELTLTGFKYPLNNCHITLGSTLCISNELIHSRGTFSFAKGILIMIRSTD.

The protein belongs to the thiamine pyrophosphokinase family.

The enzyme catalyses thiamine + ATP = thiamine diphosphate + AMP + H(+). It participates in cofactor biosynthesis; thiamine diphosphate biosynthesis; thiamine diphosphate from thiamine: step 1/1. In terms of biological role, catalyzes the ATP-dependent phosphorylation of thiamine to thiamine pyrophosphate. Is involved in thiamine salvage. This Bacillus subtilis (strain 168) protein is Thiamine pyrophosphokinase.